The following is an 861-amino-acid chain: Homeobox-leucine zipper protein HOX29 (861 aa).

Residues 2–65 (DASKYVRYTP…NRRCREKQRK (64 aa)) constitute a DNA-binding region (homeobox). Residues 57-99 (RRCREKQRKESSRLQALNRKLTAMNKLLMEENDRLQKQVSQLV) adopt a coiled-coil conformation. Residues 162-390 (RDASPAGLMS…VAHEDTRSVI (229 aa)) enclose the START domain.

Belongs to the HD-ZIP homeobox family. Class III subfamily. As to expression, expressed in roots, stems and leaf blades.

Its subcellular location is the nucleus. Probable transcription factor. The chain is Homeobox-leucine zipper protein HOX29 (HOX29) from Oryza sativa subsp. indica (Rice).